The primary structure comprises 55 residues: MSTSRKLKSHGMRRSKSRSPHKGVKRGGSKRKYRKGNLKSRKRGDDANRNYRSHL.

Residues Met-1 to Lys-42 are compositionally biased toward basic residues. Residues Met-1 to Leu-55 form a disordered region. 2 positions are modified to phosphoserine: Ser-9 and Ser-40.

The protein belongs to the nuclear transition protein 1 family. In terms of tissue distribution, expressed by spermatids (at protein level).

Its subcellular location is the nucleus. It localises to the chromosome. Functionally, plays a key role in the replacement of histones to protamine in the elongating spermatids of mammals. In condensing spermatids, loaded onto the nucleosomes, where it promotes the recruitment and processing of protamines, which are responsible for histone eviction. This chain is Spermatid nuclear transition protein 1 (TNP1), found in Homo sapiens (Human).